Here is a 449-residue protein sequence, read N- to C-terminus: Xylose isomerase (449 aa).

Residues H103 and D106 contribute to the active site. Mg(2+) is bound by residues E234, E270, H273, D298, D309, D311, and D342.

Belongs to the xylose isomerase family. Homotetramer. Mg(2+) serves as cofactor.

The protein localises to the cytoplasm. It carries out the reaction alpha-D-xylose = alpha-D-xylulofuranose. In Levilactobacillus brevis (strain ATCC 367 / BCRC 12310 / CIP 105137 / JCM 1170 / LMG 11437 / NCIMB 947 / NCTC 947) (Lactobacillus brevis), this protein is Xylose isomerase.